The chain runs to 308 residues: HPr kinase/phosphorylase (308 aa).

Residues His141 and Lys162 contribute to the active site. 156–163 (GKSGVGKS) provides a ligand contact to ATP. Residue Ser163 participates in Mg(2+) binding. Catalysis depends on Asp180, which acts as the Proton acceptor; for phosphorylation activity. Proton donor; for dephosphorylation activity. An important for the catalytic mechanism of both phosphorylation and dephosphorylation region spans residues 204–213 (MEIRGVGILD). Glu205 contributes to the Mg(2+) binding site. Residue Arg246 is part of the active site. Positions 267–272 (PVKPGR) are important for the catalytic mechanism of dephosphorylation.

This sequence belongs to the HPrK/P family. In terms of assembly, homohexamer. The cofactor is Mg(2+).

The catalysed reaction is [HPr protein]-L-serine + ATP = [HPr protein]-O-phospho-L-serine + ADP + H(+). The enzyme catalyses [HPr protein]-O-phospho-L-serine + phosphate + H(+) = [HPr protein]-L-serine + diphosphate. Catalyzes the ATP- as well as the pyrophosphate-dependent phosphorylation of a specific serine residue in HPr, a phosphocarrier protein of the phosphoenolpyruvate-dependent sugar phosphotransferase system (PTS). HprK/P also catalyzes the pyrophosphate-producing, inorganic phosphate-dependent dephosphorylation (phosphorolysis) of seryl-phosphorylated HPr (P-Ser-HPr). The two antagonistic activities of HprK/P are regulated by several intracellular metabolites, which change their concentration in response to the absence or presence of rapidly metabolisable carbon sources (glucose, fructose, etc.) in the growth medium. Therefore, by controlling the phosphorylation state of HPr, HPrK/P is a sensor enzyme that plays a major role in the regulation of carbon metabolism and sugar transport: it mediates carbon catabolite repression (CCR), and regulates PTS-catalyzed carbohydrate uptake and inducer exclusion. The protein is HPr kinase/phosphorylase of Peptoclostridium acidaminophilum (Eubacterium acidaminophilum).